The primary structure comprises 29 residues: GLPVCGETCFGGTCNTPGCTCSYPICTRN.

Residues glycine 1 to asparagine 29 constitute a cross-link (cyclopeptide (Gly-Asn)). Cystine bridges form between cysteine 5/cysteine 19, cysteine 9/cysteine 21, and cysteine 14/cysteine 26.

This is a cyclic peptide.

Probably participates in a plant defense mechanism. This is Cyclotide vibi-B from Viola biflora (Yellow wood violet).